A 923-amino-acid polypeptide reads, in one-letter code: Mitochondrial 10-formyltetrahydrofolate dehydrogenase (923 aa).

A mitochondrion; not cleaved-targeting transit peptide spans Met-1–Phe-19. A hydrolase domain region spans residues Leu-23–Glu-331. Ser-31 carries the phosphoserine modification. At Lys-60 the chain carries N6-succinyllysine. Gln-110–Ile-112 is a binding site for (6R)-10-formyltetrahydrofolate. The active-site Proton donor is the His-128. Asp-164 provides a ligand contact to (6R)-10-formyltetrahydrofolate. The Carrier domain maps to Ala-339 to Leu-416. Ser-375 bears the O-(pantetheine 4'-phosphoryl)serine mark. The segment at Thr-438–Tyr-923 is aldehyde dehydrogenase domain. NADP(+)-binding positions include Ile-592–Trp-594 and Lys-618–Gln-621. Phosphoserine is present on Ser-650. NADP(+) is bound by residues Gly-651–Gln-656 and Gly-671–Ser-672. At Lys-681 the chain carries N6-succinyllysine. Glu-694 (proton acceptor) is an active-site residue. Glu-694–Leu-695 provides a ligand contact to NADP(+). The active-site Proton donor is Cys-728. NADP(+) contacts are provided by residues Lys-778 and Glu-825–Phe-827. Lys-903 carries the N6-acetyllysine modification.

The protein in the N-terminal section; belongs to the GART family. In the C-terminal section; belongs to the aldehyde dehydrogenase family. ALDH1L subfamily. Phosphopantetheinylation at Ser-375 by AASDHPPT is required for the formyltetrahydrofolate dehydrogenase activity.

The protein resides in the mitochondrion. It carries out the reaction (6R)-10-formyltetrahydrofolate + NADP(+) + H2O = (6S)-5,6,7,8-tetrahydrofolate + CO2 + NADPH + H(+). Mitochondrial 10-formyltetrahydrofolate dehydrogenase that catalyzes the NADP(+)-dependent conversion of 10-formyltetrahydrofolate to tetrahydrofolate and carbon dioxide. The polypeptide is Mitochondrial 10-formyltetrahydrofolate dehydrogenase (Mus musculus (Mouse)).